Here is a 624-residue protein sequence, read N- to C-terminus: DNA (cytosine-5)-methyltransferase DRM1 (624 aa).

UBA domains are found at residues 57 to 100 (RISD…LFNY) and 108 to 149 (SSKS…LLTY). Residues 160-189 (DMNININDDDDDNLYSLSSDDEEDELNNSS) form a disordered region. The span at 166 to 185 (NDDDDDNLYSLSSDDEEDEL) shows a compositional bias: acidic residues. Residues 188 to 231 (SSNEDRILQALIKMGYLREDAAIAIERCGEDASMEEVVDFICAA) enclose the UBA 3 domain. Residues 291–622 (MHRPVPIPDI…EAVRRKARHM (332 aa)) enclose the SAM-dependent MTase DRM-type domain.

Belongs to the class I-like SAM-binding methyltransferase superfamily. DRM-methyltransferase family.

It localises to the nucleus. The catalysed reaction is a 2'-deoxycytidine in DNA + S-adenosyl-L-methionine = a 5-methyl-2'-deoxycytidine in DNA + S-adenosyl-L-homocysteine + H(+). In terms of biological role, involved in de novo DNA methylation. Controls asymmetric and CpNpG methylation. Required for FWA gene silencing but not for the maintenance of SUP gene silencing. Functionally redundant to CMT3 to maintain non-CpG methylation. Involved in RNA-directed DNA methylation. The protein is DNA (cytosine-5)-methyltransferase DRM1 (DRM1) of Arabidopsis thaliana (Mouse-ear cress).